The primary structure comprises 236 residues: 1-(5-phosphoribosyl)-5-[(5-phosphoribosylamino)methylideneamino] imidazole-4-carboxamide isomerase (236 aa).

Catalysis depends on aspartate 8, which acts as the Proton acceptor. Residue aspartate 127 is the Proton donor of the active site.

This sequence belongs to the HisA/HisF family.

Its subcellular location is the cytoplasm. The catalysed reaction is 1-(5-phospho-beta-D-ribosyl)-5-[(5-phospho-beta-D-ribosylamino)methylideneamino]imidazole-4-carboxamide = 5-[(5-phospho-1-deoxy-D-ribulos-1-ylimino)methylamino]-1-(5-phospho-beta-D-ribosyl)imidazole-4-carboxamide. Its pathway is amino-acid biosynthesis; L-histidine biosynthesis; L-histidine from 5-phospho-alpha-D-ribose 1-diphosphate: step 4/9. This chain is 1-(5-phosphoribosyl)-5-[(5-phosphoribosylamino)methylideneamino] imidazole-4-carboxamide isomerase, found in Sulfurimonas denitrificans (strain ATCC 33889 / DSM 1251) (Thiomicrospira denitrificans (strain ATCC 33889 / DSM 1251)).